The primary structure comprises 95 residues: Probable FAD-linked sulfhydryl oxidase OPG072 (95 aa).

Topologically, residues 1-8 (MNPKHWGR) are intravirion. The 95-residue stretch at 1–95 (MNPKHWGRAV…AIDVTKVNPL (95 aa)) folds into the ERV/ALR sulfhydryl oxidase domain. A helical transmembrane segment spans residues 9 to 25 (AVWTIIFIVLSQAGLDG). Residues 26–95 (NIEACKRKLY…AIDVTKVNPL (70 aa)) lie on the Virion surface side of the membrane. A disulfide bond links cysteine 43 and cysteine 46.

The protein belongs to the orthopoxvirus OPG072 family. As to quaternary structure, interacts with OPG128/A2.5; this interaction involves formation of a transient disulfide-bonded intermediate, allowing disulfide bond transfer. The cofactor is FAD.

The protein resides in the virion membrane. It localises to the host cytoplasm. It catalyses the reaction 2 R'C(R)SH + O2 = R'C(R)S-S(R)CR' + H2O2. Its function is as follows. FAD-dependent sulfhydryl oxidase that catalyzes disulfide bond formation. The complete pathway for formation of disulfide bonds in intracellular virion membrane proteins sequentially involves thiol-disulfide transfer between OPG072/E10, OPG128/A2.5 and OPG088/G4. The polypeptide is Probable FAD-linked sulfhydryl oxidase OPG072 (OPG072) (Bos taurus (Bovine)).